The primary structure comprises 86 residues: MTILASISSIGNIKSSSKSNIASSSSSSSSQSLNSIQCCSCSLALGNTVGNLVGGVLFGTGVIVGSVLNTVGNITTPILHPDCGCN.

The tract at residues 11–33 is disordered; sequence GNIKSSSKSNIASSSSSSSSQSL.

This sequence belongs to the hssA/B family.

This is HssA/B-like protein 60 (hssl60) from Dictyostelium discoideum (Social amoeba).